A 264-amino-acid polypeptide reads, in one-letter code: Thymidylate synthase (264 aa).

Arginine 21 lines the dUMP pocket. Position 51 (histidine 51) interacts with (6R)-5,10-methylene-5,6,7,8-tetrahydrofolate. 126 to 127 (RR) contributes to the dUMP binding site. Cysteine 146 functions as the Nucleophile in the catalytic mechanism. DUMP-binding positions include 166–169 (RSAD), asparagine 177, and 207–209 (HLY). Residue aspartate 169 coordinates (6R)-5,10-methylene-5,6,7,8-tetrahydrofolate. Serine 263 lines the (6R)-5,10-methylene-5,6,7,8-tetrahydrofolate pocket.

The protein belongs to the thymidylate synthase family. Bacterial-type ThyA subfamily. In terms of assembly, homodimer.

The protein localises to the cytoplasm. It carries out the reaction dUMP + (6R)-5,10-methylene-5,6,7,8-tetrahydrofolate = 7,8-dihydrofolate + dTMP. It participates in pyrimidine metabolism; dTTP biosynthesis. Functionally, catalyzes the reductive methylation of 2'-deoxyuridine-5'-monophosphate (dUMP) to 2'-deoxythymidine-5'-monophosphate (dTMP) while utilizing 5,10-methylenetetrahydrofolate (mTHF) as the methyl donor and reductant in the reaction, yielding dihydrofolate (DHF) as a by-product. This enzymatic reaction provides an intracellular de novo source of dTMP, an essential precursor for DNA biosynthesis. In Neisseria meningitidis serogroup A / serotype 4A (strain DSM 15465 / Z2491), this protein is Thymidylate synthase.